Reading from the N-terminus, the 342-residue chain is N-acetyl-gamma-glutamyl-phosphate reductase (342 aa).

Cys-149 is an active-site residue.

It belongs to the NAGSA dehydrogenase family. Type 1 subfamily.

The protein localises to the cytoplasm. The catalysed reaction is N-acetyl-L-glutamate 5-semialdehyde + phosphate + NADP(+) = N-acetyl-L-glutamyl 5-phosphate + NADPH + H(+). The protein operates within amino-acid biosynthesis; L-arginine biosynthesis; N(2)-acetyl-L-ornithine from L-glutamate: step 3/4. In terms of biological role, catalyzes the NADPH-dependent reduction of N-acetyl-5-glutamyl phosphate to yield N-acetyl-L-glutamate 5-semialdehyde. The protein is N-acetyl-gamma-glutamyl-phosphate reductase of Nitrosospira multiformis (strain ATCC 25196 / NCIMB 11849 / C 71).